The following is a 404-amino-acid chain: Short chain dehydrogenase sirR (404 aa).

Residues 1–28 form the signal peptide; sequence MHSKPQRALVIGATGVSGWSLCLQLLQT. Residues Ser56 and Leu58 each contribute to the NADP(+) site. Residues Asn67 and Asn157 are each glycosylated (N-linked (GlcNAc...) asparagine). Ser237 (proton donor) is an active-site residue. Residue Asn274 is glycosylated (N-linked (GlcNAc...) asparagine). Val291 is an NADP(+) binding site.

This sequence belongs to the short-chain dehydrogenases/reductases (SDR) family. Highly divergent.

The protein operates within mycotoxin biosynthesis. Short chain dehydrogenase; part of the gene cluster that mediates the biosynthesis of sirodesmin PL, an epipolythiodioxopiperazine (ETP) characterized by a disulfide bridged cyclic dipeptide and that acts as a phytotoxin which is involved in the blackleg didease of canola. SirD catalyzes the O-prenylation of L-tyrosine (L-Tyr) in the presence of dimethylallyl diphosphate (DMAPP) to yield 4-O-dimethylallyl-L-Tyr, and therefore represents probably the first pathway-specific enzyme in the biosynthesis of sirodesmin PL. 4-O-dimethylallyl-L-Tyr, then undergoes condensation with L-Ser in a reaction catalyzed by the non-ribosomal peptide synthase sirP to form the diketopiperazine (DKP) backbone. Further bishydroxylation of the DKP performed by the cytochrome P450 monooxygenase sirC leads to the production of the intermediate phomamide. This step is essential to form the reactive thiol group required for toxicity of sirodesmin PL. The next steps of sirodesmin biosynthesis are not well understood yet, but some predictions could be made from intermediate compounds identification. Phomamide is converted into phomalizarine via oxidation, probably by sirT. Further oxidation, methylation (by sirM or sirN) and reduction steps convert phomalizarine to deacetyl sirodesmin. Finally, acetyltransferase sirH probably acetylates deacetyl sirodesmin to produce sirodesmin PL. This is Short chain dehydrogenase sirR from Leptosphaeria maculans (Blackleg fungus).